Here is a 106-residue protein sequence, read N- to C-terminus: Small ribosomal subunit protein uS10 (106 aa).

This sequence belongs to the universal ribosomal protein uS10 family. Part of the 30S ribosomal subunit.

Functionally, involved in the binding of tRNA to the ribosomes. This is Small ribosomal subunit protein uS10 from Caldicellulosiruptor saccharolyticus (strain ATCC 43494 / DSM 8903 / Tp8T 6331).